The sequence spans 183 residues: UPF0725 protein At4g11700 (183 aa).

Belongs to the UPF0725 (EMB2204) family.

This is UPF0725 protein At4g11700 from Arabidopsis thaliana (Mouse-ear cress).